The chain runs to 188 residues: Peptide deformylase (188 aa).

Positions 70 to 90 are disordered; that stretch reads AEPVACDHDGHHHHHQPTKKE. 2 residues coordinate Fe cation: Cys113 and His155. Residue Glu156 is part of the active site. His159 serves as a coordination point for Fe cation.

Belongs to the polypeptide deformylase family. Fe(2+) serves as cofactor.

It catalyses the reaction N-terminal N-formyl-L-methionyl-[peptide] + H2O = N-terminal L-methionyl-[peptide] + formate. In terms of biological role, removes the formyl group from the N-terminal Met of newly synthesized proteins. Requires at least a dipeptide for an efficient rate of reaction. N-terminal L-methionine is a prerequisite for activity but the enzyme has broad specificity at other positions. This chain is Peptide deformylase, found in Novosphingobium aromaticivorans (strain ATCC 700278 / DSM 12444 / CCUG 56034 / CIP 105152 / NBRC 16084 / F199).